The sequence spans 238 residues: Ribosomal RNA small subunit methyltransferase G (238 aa).

S-adenosyl-L-methionine-binding positions include Gly-77, Phe-82, 128 to 129 (AE), and Arg-146. The segment at 216–238 (KKRQTPKKYPRKPGTPNKEPLLK) is disordered.

This sequence belongs to the methyltransferase superfamily. RNA methyltransferase RsmG family.

The protein localises to the cytoplasm. Specifically methylates the N7 position of guanine in position 535 of 16S rRNA. This Macrococcus caseolyticus (strain JCSC5402) (Macrococcoides caseolyticum) protein is Ribosomal RNA small subunit methyltransferase G.